Reading from the N-terminus, the 227-residue chain is Threonine--tRNA ligase (227 aa).

Residues 1–120 (DIELKLSTRP…LIEHYEGAFP (120 aa)) form a catalytic region.

It belongs to the class-II aminoacyl-tRNA synthetase family. Homodimer.

The protein resides in the cytoplasm. It catalyses the reaction tRNA(Thr) + L-threonine + ATP = L-threonyl-tRNA(Thr) + AMP + diphosphate + H(+). Functionally, catalyzes the attachment of threonine to tRNA(Thr) in a two-step reaction: L-threonine is first activated by ATP to form Thr-AMP and then transferred to the acceptor end of tRNA(Thr). Also edits incorrectly charged L-seryl-tRNA(Thr). The protein is Threonine--tRNA ligase of Pseudomonas syringae pv. syringae.